The chain runs to 272 residues: Elongation factor Ts (272 aa).

The segment at 76 to 79 (TDFV) is involved in Mg(2+) ion dislocation from EF-Tu.

The protein belongs to the EF-Ts family.

It is found in the cytoplasm. Functionally, associates with the EF-Tu.GDP complex and induces the exchange of GDP to GTP. It remains bound to the aminoacyl-tRNA.EF-Tu.GTP complex up to the GTP hydrolysis stage on the ribosome. This is Elongation factor Ts from Corynebacterium jeikeium (strain K411).